A 1270-amino-acid chain; its full sequence is DNA-directed RNA polymerase subunit beta (1270 aa).

Belongs to the RNA polymerase beta chain family. As to quaternary structure, the RNAP catalytic core consists of 2 alpha, 1 beta, 1 beta' and 1 omega subunit. When a sigma factor is associated with the core the holoenzyme is formed, which can initiate transcription.

It carries out the reaction RNA(n) + a ribonucleoside 5'-triphosphate = RNA(n+1) + diphosphate. Its function is as follows. DNA-dependent RNA polymerase catalyzes the transcription of DNA into RNA using the four ribonucleoside triphosphates as substrates. The protein is DNA-directed RNA polymerase subunit beta of Bacteroides fragilis (strain ATCC 25285 / DSM 2151 / CCUG 4856 / JCM 11019 / LMG 10263 / NCTC 9343 / Onslow / VPI 2553 / EN-2).